We begin with the raw amino-acid sequence, 384 residues long: L-lactate dehydrogenase (384 aa).

One can recognise an FMN hydroxy acid dehydrogenase domain in the interval 1–380; that stretch reads MIISSSNDYR…NESCLVEMNK (380 aa). Position 24 (Tyr24) interacts with substrate. Residues Ser106 and Gln127 each contribute to the FMN site. Tyr129 serves as a coordination point for substrate. Thr155 is an FMN binding site. Residue Arg164 coordinates substrate. An FMN-binding site is contributed by Lys251. Catalysis depends on His275, which acts as the Proton acceptor. Position 278 (Arg278) interacts with substrate. FMN is bound at residue 306-330; sequence DSGIRNGLDVVRMLALGADSVMLGR.

Belongs to the FMN-dependent alpha-hydroxy acid dehydrogenase family. The cofactor is FMN.

The protein localises to the cell inner membrane. It catalyses the reaction (S)-lactate + A = pyruvate + AH2. In terms of biological role, catalyzes the conversion of L-lactate to pyruvate. Is coupled to the respiratory chain. This Acinetobacter baylyi (strain ATCC 33305 / BD413 / ADP1) protein is L-lactate dehydrogenase.